Consider the following 591-residue polypeptide: L-fucose isomerase (591 aa).

Residues E337 and D361 each act as proton acceptor in the active site. Mn(2+)-binding residues include E337, D361, and H528.

This sequence belongs to the L-fucose isomerase family. In terms of assembly, homohexamer. It depends on Mn(2+) as a cofactor.

The protein resides in the cytoplasm. It catalyses the reaction L-fucose = L-fuculose. The protein operates within carbohydrate degradation; L-fucose degradation; L-lactaldehyde and glycerone phosphate from L-fucose: step 1/3. Functionally, converts the aldose L-fucose into the corresponding ketose L-fuculose. This chain is L-fucose isomerase, found in Escherichia coli O139:H28 (strain E24377A / ETEC).